We begin with the raw amino-acid sequence, 715 residues long: Polyribonucleotide nucleotidyltransferase (715 aa).

Mg(2+) is bound by residues aspartate 493 and aspartate 499. One can recognise a KH domain in the interval 560 to 619 (PRMITIKINPEKIRDVIGKGGSVIRALTEETGTTIDISDDGVVTIASTSSEGMAEAKKRI). The region spanning 629–697 (GQVYEGTVLK…EKGRVRLSAK (69 aa)) is the S1 motif domain.

Belongs to the polyribonucleotide nucleotidyltransferase family. Mg(2+) serves as cofactor.

The protein localises to the cytoplasm. It catalyses the reaction RNA(n+1) + phosphate = RNA(n) + a ribonucleoside 5'-diphosphate. Functionally, involved in mRNA degradation. Catalyzes the phosphorolysis of single-stranded polyribonucleotides processively in the 3'- to 5'-direction. The polypeptide is Polyribonucleotide nucleotidyltransferase (Burkholderia vietnamiensis (strain G4 / LMG 22486) (Burkholderia cepacia (strain R1808))).